Reading from the N-terminus, the 1066-residue chain is Glucose transport transcription regulator RGT1 (1066 aa).

2 stretches are compositionally biased toward polar residues: residues 1-11 (MTPMSENNGSE) and 42-57 (VESQSSQGASGGNTSA). Disordered regions lie at residues 1-70 (MTPM…ACDQ), 108-153 (PSKG…VLLP), 214-285 (YASP…QQQY), 298-399 (GANG…EYPL), 616-645 (DATKSGSNDNDNTNNDNNSNNANNDNNDSR), and 849-871 (MEHDDSGNSASRKFTTSQAESGK). The segment at residues 68 to 97 (CDQCRKRKIRCDYDDDKGVCTSCRKNGESC) is a DNA-binding region (zn(2)-C6 fungal-type). 4 stretches are compositionally biased toward polar residues: residues 118–131 (VSRSISGENNNTAA), 139–148 (EFSSPSSRQG), 260–270 (GSNPPSLKNVS), and 314–327 (MSPSASVPYQSVPM). Low complexity-rich tracts occupy residues 328 to 350 (NQSNSNGLSQQQQQPIQWPKVQP) and 622 to 641 (SNDNDNTNNDNNSNNANNDN). The span at 855 to 871 (GNSASRKFTTSQAESGK) shows a compositional bias: polar residues.

Belongs to the EDS1/RGT1 family.

It is found in the nucleus. The protein resides in the cytoplasm. Functionally, glucose-responsive transcription factor that regulates expression of several glucose transporter (HXT) genes in response to glucose. In the absence of glucose, it functions as a transcriptional repressor, whereas high concentrations of glucose cause it to function as a transcriptional activator. In cells growing on low levels of glucose, has a neutral role, neither repressing nor activating transcription. This chain is Glucose transport transcription regulator RGT1 (RGT1), found in Zygosaccharomyces rouxii (strain ATCC 2623 / CBS 732 / NBRC 1130 / NCYC 568 / NRRL Y-229).